A 249-amino-acid polypeptide reads, in one-letter code: Proteasome subunit alpha type-7-1 (249 aa).

A Phosphoserine modification is found at Ser177.

Belongs to the peptidase T1A family. In terms of assembly, the 26S proteasome consists of a 20S proteasome core and two 19S regulatory subunits. The 20S proteasome core is composed of 28 subunits that are arranged in four stacked rings, resulting in a barrel-shaped structure. The two end rings are each formed by seven alpha subunits, and the two central rings are each formed by seven beta subunits. The catalytic chamber with the active sites is on the inside of the barrel. Interacts with PI31; this interaction is reduced by PI31 ADP-ribosylation.

It localises to the cytoplasm. The protein resides in the nucleus. In terms of biological role, the proteasome is a multicatalytic proteinase complex which is characterized by its ability to cleave peptides with Arg, Phe, Tyr, Leu, and Glu adjacent to the leaving group at neutral or slightly basic pH. The proteasome has an ATP-dependent proteolytic activity. The protein is Proteasome subunit alpha type-7-1 (Prosalpha4) of Drosophila melanogaster (Fruit fly).